The chain runs to 198 residues: NADH-quinone oxidoreductase subunit I (198 aa).

4Fe-4S ferredoxin-type domains lie at 42 to 72 (LNRW…VEGA) and 88 to 117 (RVYE…MTND). C52, C55, C58, C62, C97, C100, C103, and C107 together coordinate [4Fe-4S] cluster. The tract at residues 137-198 (APLKEGMEQP…DTQHKDEEAA (62 aa)) is disordered. Residues 182-198 (AHRDDDNDTQHKDEEAA) are compositionally biased toward basic and acidic residues.

The protein belongs to the complex I 23 kDa subunit family. As to quaternary structure, NDH-1 is composed of 14 different subunits. Subunits NuoA, H, J, K, L, M, N constitute the membrane sector of the complex. The cofactor is [4Fe-4S] cluster.

Its subcellular location is the cell membrane. The enzyme catalyses a quinone + NADH + 5 H(+)(in) = a quinol + NAD(+) + 4 H(+)(out). In terms of biological role, NDH-1 shuttles electrons from NADH, via FMN and iron-sulfur (Fe-S) centers, to quinones in the respiratory chain. The immediate electron acceptor for the enzyme in this species is believed to be ubiquinone. Couples the redox reaction to proton translocation (for every two electrons transferred, four hydrogen ions are translocated across the cytoplasmic membrane), and thus conserves the redox energy in a proton gradient. The protein is NADH-quinone oxidoreductase subunit I of Cutibacterium acnes (strain DSM 16379 / KPA171202) (Propionibacterium acnes).